The following is an 85-amino-acid chain: Colicin-E8 immunity protein in ColE6 (85 aa).

This sequence belongs to the colicins ColE2/ColE8/ColE9 and pyocins S1/S2 family.

The chain is Colicin-E8 immunity protein in ColE6 (imm) from Escherichia coli.